The following is a 274-amino-acid chain: Probable ribosomal RNA small subunit methyltransferase A (274 aa).

His-22, Leu-24, Gly-50, Glu-71, Asp-99, and Asn-114 together coordinate S-adenosyl-L-methionine.

The protein belongs to the class I-like SAM-binding methyltransferase superfamily. rRNA adenine N(6)-methyltransferase family. RsmA subfamily.

The protein resides in the cytoplasm. Its function is as follows. Specifically dimethylates two adjacent adenosines in the loop of a conserved hairpin near the 3'-end of 16S rRNA in the 30S particle. May play a critical role in biogenesis of 30S subunits. The sequence is that of Probable ribosomal RNA small subunit methyltransferase A from Natronomonas pharaonis (strain ATCC 35678 / DSM 2160 / CIP 103997 / JCM 8858 / NBRC 14720 / NCIMB 2260 / Gabara) (Halobacterium pharaonis).